The sequence spans 119 residues: Small ribosomal subunit protein uS13 (119 aa).

A disordered region spans residues 94–119; that stretch reads GLPVRGQRTQTNARTRKGPRRGPAGK.

The protein belongs to the universal ribosomal protein uS13 family. Part of the 30S ribosomal subunit. Forms a loose heterodimer with protein S19. Forms two bridges to the 50S subunit in the 70S ribosome.

In terms of biological role, located at the top of the head of the 30S subunit, it contacts several helices of the 16S rRNA. In the 70S ribosome it contacts the 23S rRNA (bridge B1a) and protein L5 of the 50S subunit (bridge B1b), connecting the 2 subunits; these bridges are implicated in subunit movement. Contacts the tRNAs in the A and P-sites. The sequence is that of Small ribosomal subunit protein uS13 from Alkalilimnicola ehrlichii (strain ATCC BAA-1101 / DSM 17681 / MLHE-1).